The chain runs to 361 residues: Peptide chain release factor 1 (361 aa).

At glutamine 237 the chain carries N5-methylglutamine. Positions 285–296 (DEKRRSAEESTR) are enriched in basic and acidic residues. Residues 285 to 305 (DEKRRSAEESTRRNLVGSGDR) form a disordered region.

Belongs to the prokaryotic/mitochondrial release factor family. Methylated by PrmC. Methylation increases the termination efficiency of RF1.

It is found in the cytoplasm. In terms of biological role, peptide chain release factor 1 directs the termination of translation in response to the peptide chain termination codons UAG and UAA. The chain is Peptide chain release factor 1 from Shewanella sediminis (strain HAW-EB3).